A 174-amino-acid polypeptide reads, in one-letter code: UPF0340 protein MW2038 (174 aa).

It belongs to the UPF0340 family.

The protein is UPF0340 protein MW2038 of Staphylococcus aureus (strain MW2).